A 217-amino-acid polypeptide reads, in one-letter code: MLQFTLSYIKSLTKNLSIISPLPPPKPIKQNHQTKPAMNNFQPPPPSEMPDYNGLLGTDDIGGFRYGIGVSIGVLLLITTITLTSYYCTRNQLSSSPSQTNQDSTRIHHHHHHVIIDVVPGLDEDTIQSYPKILYSEAKGPTTASCCAICLGDYKGKHLLRQLPDCNHLFHLKCIDTWLRLNPTCPVCRTSPLPTPLSTPLAEVVPLASSVAATRMS.

The helical transmembrane segment at I61–I81 threads the bilayer. The segment at C147–R189 adopts an RING-type; atypical zinc-finger fold.

This sequence belongs to the RING-type zinc finger family. ATL subfamily.

The protein localises to the membrane. It carries out the reaction S-ubiquitinyl-[E2 ubiquitin-conjugating enzyme]-L-cysteine + [acceptor protein]-L-lysine = [E2 ubiquitin-conjugating enzyme]-L-cysteine + N(6)-ubiquitinyl-[acceptor protein]-L-lysine.. It participates in protein modification; protein ubiquitination. This chain is RING-H2 finger protein ATL70 (ATL70), found in Arabidopsis thaliana (Mouse-ear cress).